The primary structure comprises 156 residues: ATP synthase subunit b (156 aa).

Residues 3-23 traverse the membrane as a helical segment; sequence ITLTIFAQALAFAGLIWIVAT.

It belongs to the ATPase B chain family. In terms of assembly, F-type ATPases have 2 components, F(1) - the catalytic core - and F(0) - the membrane proton channel. F(1) has five subunits: alpha(3), beta(3), gamma(1), delta(1), epsilon(1). F(0) has three main subunits: a(1), b(2) and c(10-14). The alpha and beta chains form an alternating ring which encloses part of the gamma chain. F(1) is attached to F(0) by a central stalk formed by the gamma and epsilon chains, while a peripheral stalk is formed by the delta and b chains.

Its subcellular location is the cell inner membrane. In terms of biological role, f(1)F(0) ATP synthase produces ATP from ADP in the presence of a proton or sodium gradient. F-type ATPases consist of two structural domains, F(1) containing the extramembraneous catalytic core and F(0) containing the membrane proton channel, linked together by a central stalk and a peripheral stalk. During catalysis, ATP synthesis in the catalytic domain of F(1) is coupled via a rotary mechanism of the central stalk subunits to proton translocation. Its function is as follows. Component of the F(0) channel, it forms part of the peripheral stalk, linking F(1) to F(0). The chain is ATP synthase subunit b from Xanthomonas campestris pv. campestris (strain 8004).